The primary structure comprises 447 residues: tRNA modification GTPase MnmE (447 aa).

(6S)-5-formyl-5,6,7,8-tetrahydrofolate is bound by residues arginine 24, glutamate 81, and lysine 120. In terms of domain architecture, TrmE-type G spans 216-371 (GLNVAIAGKP…LRKELSNISG (156 aa)). Asparagine 226 lines the K(+) pocket. GTP contacts are provided by residues 226–231 (NAGKSS), 245–251 (TDIAGTT), and 270–273 (DTAG). Serine 230 contacts Mg(2+). K(+)-binding residues include threonine 245, isoleucine 247, and threonine 250. Threonine 251 provides a ligand contact to Mg(2+). Lysine 447 contributes to the (6S)-5-formyl-5,6,7,8-tetrahydrofolate binding site.

It belongs to the TRAFAC class TrmE-Era-EngA-EngB-Septin-like GTPase superfamily. TrmE GTPase family. As to quaternary structure, homodimer. Heterotetramer of two MnmE and two MnmG subunits. The cofactor is K(+).

It localises to the cytoplasm. In terms of biological role, exhibits a very high intrinsic GTPase hydrolysis rate. Involved in the addition of a carboxymethylaminomethyl (cmnm) group at the wobble position (U34) of certain tRNAs, forming tRNA-cmnm(5)s(2)U34. In Vesicomyosocius okutanii subsp. Calyptogena okutanii (strain HA), this protein is tRNA modification GTPase MnmE.